The primary structure comprises 445 residues: Nuclear hormone receptor family member nhr-1 (445 aa).

The tract at residues 19–55 (PMVNSQRNEDPSMYMNGSAASVSHTNGSSSMGNDQKF) is disordered. Over residues 36–51 (SAASVSHTNGSSSMGN) the composition is skewed to polar residues. Positions 70–145 (GELCAVCSDL…VGMDAKALQI (76 aa)) form a DNA-binding region, nuclear receptor. 2 consecutive NR C4-type zinc fingers follow at residues 73–93 (CAVCSDLATGYHYGVASCNGC) and 109–133 (CQYNGNCDVNKNIRCACRHCRFNKC). The NR LBD domain maps to 179–444 (QDQEIIDQLT…PFVKELCMKR (266 aa)).

This sequence belongs to the nuclear hormone receptor family.

It localises to the nucleus. Its function is as follows. Orphan nuclear receptor which acts in concert with the insulin/IGF-1-like signaling (IIS) pathway during osmotic stress, perhaps in response to a ligand modified by the sulfotransferase ssu-1. This is Nuclear hormone receptor family member nhr-1 (nhr-1) from Caenorhabditis elegans.